A 197-amino-acid polypeptide reads, in one-letter code: Allatostatins (197 aa).

The signal sequence occupies residues 1–27; sequence MRSRTSVLTSSLAFLYFFGIVGRSALA. A propeptide spanning residues 28-56 is cleaved from the precursor; sequence MEETPASSMNLQHYNNMLNPMVFDDTMPE. The residue at position 76 (isoleucine 76) is an Isoleucine amide. A propeptide spanning residues 80-86 is cleaved from the precursor; the sequence is WIDTNDN. Leucine amide occurs at positions 96, 106, 154, and 184. Positions 161–197 are disordered; the sequence is YSGGQPLGSKRPNDMLSQRYHFGLGKRMSEDEEESSQ. The propeptide occupies 188 to 197; the sequence is MSEDEEESSQ.

The protein belongs to the allatostatin family.

It localises to the secreted. In terms of biological role, neuropeptides. The sequence is that of Allatostatins from Apis mellifera (Honeybee).